Reading from the N-terminus, the 251-residue chain is MRKNIVAGNWKMNKTLQEGIALAKELNEALANEKPNCDVIICTPFIHLASVTPLVDAAKIGVGAENCADKESGAYTGEVSAAMVASTGAKYVILGHSERRAYYGETVEILKDKVKLALANGLTPIFCIGEVLEEREANKQNEVVAAQLASVFDLSAEDFSKIVLAYEPVWAIGTGKTASPAQAQEIHAFIRSAVAEKYGKEIADNTSILYGGSCKPSNAKELFANPDVDGGLIGGAALKVADFKGIIDAFN.

A substrate-binding site is contributed by 9–11 (NWK). H96 serves as the catalytic Electrophile. Residue E167 is the Proton acceptor of the active site. Residues G173, S213, and 234–235 (GG) each bind substrate.

The protein belongs to the triosephosphate isomerase family. Homodimer.

It localises to the cytoplasm. It catalyses the reaction D-glyceraldehyde 3-phosphate = dihydroxyacetone phosphate. The protein operates within carbohydrate biosynthesis; gluconeogenesis. It participates in carbohydrate degradation; glycolysis; D-glyceraldehyde 3-phosphate from glycerone phosphate: step 1/1. Functionally, involved in the gluconeogenesis. Catalyzes stereospecifically the conversion of dihydroxyacetone phosphate (DHAP) to D-glyceraldehyde-3-phosphate (G3P). The chain is Triosephosphate isomerase from Bacteroides fragilis (strain ATCC 25285 / DSM 2151 / CCUG 4856 / JCM 11019 / LMG 10263 / NCTC 9343 / Onslow / VPI 2553 / EN-2).